A 265-amino-acid polypeptide reads, in one-letter code: Glutamate racemase (265 aa).

Substrate is bound by residues 10–11 (DS) and 42–43 (YG). Residue cysteine 73 is the Proton donor/acceptor of the active site. 74–75 (NT) serves as a coordination point for substrate. Cysteine 183 acts as the Proton donor/acceptor in catalysis. Position 184-185 (184-185 (TH)) interacts with substrate.

Belongs to the aspartate/glutamate racemases family.

It catalyses the reaction L-glutamate = D-glutamate. The protein operates within cell wall biogenesis; peptidoglycan biosynthesis. In terms of biological role, provides the (R)-glutamate required for cell wall biosynthesis. This Corynebacterium diphtheriae (strain ATCC 700971 / NCTC 13129 / Biotype gravis) protein is Glutamate racemase.